The sequence spans 277 residues: DNA polymerase epsilon subunit C (277 aa).

Polar residues-rich tracts occupy residues 1 to 16 (MSSPMPQSSLNNSQVA) and 24 to 39 (ETPSTTPPMISNTNTP). Residues 1-91 (MSSPMPQSSL…EEEEEEESLS (91 aa)) form a disordered region. Acidic residues predominate over residues 69–89 (ENEDDDEQEEEEEEEEEEEES).

In terms of assembly, heterotetramer. Consists of four subunits: POL2, DPB2, DPB3 and DPB4.

The protein resides in the nucleus. Functionally, as accessory component of the DNA polymerase epsilon (DNA polymerase II) participates in chromosomal DNA replication. This is DNA polymerase epsilon subunit C (DPB3) from Debaryomyces hansenii (strain ATCC 36239 / CBS 767 / BCRC 21394 / JCM 1990 / NBRC 0083 / IGC 2968) (Yeast).